A 364-amino-acid chain; its full sequence is Cobalt-precorrin-5B C(1)-methyltransferase (364 aa).

It belongs to the CbiD family.

The catalysed reaction is Co-precorrin-5B + S-adenosyl-L-methionine = Co-precorrin-6A + S-adenosyl-L-homocysteine. The protein operates within cofactor biosynthesis; adenosylcobalamin biosynthesis; cob(II)yrinate a,c-diamide from sirohydrochlorin (anaerobic route): step 6/10. Functionally, catalyzes the methylation of C-1 in cobalt-precorrin-5B to form cobalt-precorrin-6A. This chain is Cobalt-precorrin-5B C(1)-methyltransferase, found in Pseudomonas putida (strain ATCC 700007 / DSM 6899 / JCM 31910 / BCRC 17059 / LMG 24140 / F1).